A 137-amino-acid chain; its full sequence is Holo-[acyl-carrier-protein] synthase (137 aa).

Positions 8 and 57 each coordinate Mg(2+).

The protein belongs to the P-Pant transferase superfamily. AcpS family. Mg(2+) is required as a cofactor.

It is found in the cytoplasm. It carries out the reaction apo-[ACP] + CoA = holo-[ACP] + adenosine 3',5'-bisphosphate + H(+). In terms of biological role, transfers the 4'-phosphopantetheine moiety from coenzyme A to a Ser of acyl-carrier-protein. This Hyphomonas neptunium (strain ATCC 15444) protein is Holo-[acyl-carrier-protein] synthase.